A 168-amino-acid chain; its full sequence is Disulfide bond formation protein B (168 aa).

Topologically, residues 1–6 are cytoplasmic; that stretch reads MTSRWI. The chain crosses the membrane as a helical span at residues 7-23; the sequence is FGLVFLVCAGLLAVAFY. Residues 24-41 lie on the Periplasmic side of the membrane; it reads MEHVMGLEPCPLCWLQRF. A disulfide bridge connects residues C33 and C36. Residues 42–58 traverse the membrane as a helical segment; the sequence is GFMGAGLVSLLAFLHGP. Topologically, residues 59 to 65 are cytoplasmic; it reads RGFGNRV. Residues 66 to 82 form a helical membrane-spanning segment; sequence YGLLLIVAAGAGLAVAG. The Periplasmic portion of the chain corresponds to 83-139; sequence RQLWLQSLPADQVPACGPSVDYMLEVLPWFEVLQTALKGTGDCAEVVWRFLGLSIPG. C98 and C125 form a disulfide bridge. Residues 140–158 form a helical membrane-spanning segment; that stretch reads WTAVFFSLLIVLGLFVMLR. The Cytoplasmic segment spans residues 159–168; that stretch reads RYSPRDWLQS.

This sequence belongs to the DsbB family.

The protein resides in the cell inner membrane. Required for disulfide bond formation in some periplasmic proteins. Acts by oxidizing the DsbA protein. This is Disulfide bond formation protein B from Marinobacter nauticus (strain ATCC 700491 / DSM 11845 / VT8) (Marinobacter aquaeolei).